Here is a 452-residue protein sequence, read N- to C-terminus: Glucose-6-phosphate isomerase (452 aa).

Glutamate 290 functions as the Proton donor in the catalytic mechanism. Active-site residues include histidine 311 and lysine 425.

Belongs to the GPI family.

It localises to the cytoplasm. It carries out the reaction alpha-D-glucose 6-phosphate = beta-D-fructose 6-phosphate. The protein operates within carbohydrate biosynthesis; gluconeogenesis. It participates in carbohydrate degradation; glycolysis; D-glyceraldehyde 3-phosphate and glycerone phosphate from D-glucose: step 2/4. Functionally, catalyzes the reversible isomerization of glucose-6-phosphate to fructose-6-phosphate. The protein is Glucose-6-phosphate isomerase of Limosilactobacillus reuteri (strain DSM 20016) (Lactobacillus reuteri).